Here is a 903-residue protein sequence, read N- to C-terminus: MVSLGGFARKLFGSANDRRVRGYKGRVDAINALEAEMKALSDEALAAKTAEFRRELADGKTLDDILVPAFAVVREAALRVLGLRPFDVQLIGGMILHERAIAEMKTGEGKTLVATLPVYLNALAGKGVHVVTVNDYLAQRDAGMMGRIYGFLGMTTGVIVHGLSDEQRRDAYACDVTYATNNELGFDYLRDNMKYERGQMVQRGHFFAIVDEVDSILVDEARTPLIISGPLDDRSDLYNTINEFIPLLSPEDYEIDEKQRSANFSEEGTEKLENMLREAGLLKGESLYDIENVAIVHHVNNALKAHKLFTRDKDYIVRNGEIVIIDEFTGRMMPGRRYSEGQHQALEAKEKVQIQPENQTLASITFQNYFRMYDKLAGMTGTAATEAEEFGNIYGLEVLEVPTNLPIKRIDEDDEVYRTVGEKFKAIIDEIKSAHERGQPMLVGTTSIEKSELLADMLKKSGFSKFQVLNARYHEQEAYIVAQAGVPGAVTIATNMAGRGTDIQLGGNPDMRIQQELADVEPGPEREAREKAIREEVQKLKEKALAAGGLYVLATERHESRRIDNQLRGRSGRQGDPGRSKFYLSLQDDLMRIFGSDRMDGMLQKLGLKEGEAIVHPWINKALERAQKKVEARNFDIRKNLLKYDDVLNDQRKVIFEQRIELMDAESVTDTVTDMRNEVIEEIVAKRIPERAYAEKWDAEGLKADVQQYFNLDLPIAEWVAEEGIAEDDIRERITAAVDKAAAERAERFGPEIMQYVERSVVLQTLDHLWREHIVNLDHLRSVIGFRGYAQRDPLQEYKSEAFELFQALLGNLRQAVTAQLMRVELVREAPEEPQPLPPMQAHHIDPLTGEDDFAQAGETLLAVAPANRDPADPSTWGKVARNEACPCGSGKKYKHCHGIYEA.

Residues Gln-89, 107-111 (GEGKT), and Asp-502 contribute to the ATP site. Zn(2+) is bound by residues Cys-886, Cys-888, Cys-897, and His-898.

Belongs to the SecA family. As to quaternary structure, monomer and homodimer. Part of the essential Sec protein translocation apparatus which comprises SecA, SecYEG and auxiliary proteins SecDF-YajC and YidC. The cofactor is Zn(2+).

The protein localises to the cell inner membrane. It localises to the cytoplasm. It carries out the reaction ATP + H2O + cellular proteinSide 1 = ADP + phosphate + cellular proteinSide 2.. Its function is as follows. Part of the Sec protein translocase complex. Interacts with the SecYEG preprotein conducting channel. Has a central role in coupling the hydrolysis of ATP to the transfer of proteins into and across the cell membrane, serving both as a receptor for the preprotein-SecB complex and as an ATP-driven molecular motor driving the stepwise translocation of polypeptide chains across the membrane. This chain is Protein translocase subunit SecA, found in Rhizobium meliloti (strain 1021) (Ensifer meliloti).